Consider the following 209-residue polypeptide: Inducible T-cell costimulator (209 aa).

An N-terminal signal peptide occupies residues 1 to 19 (MKSDLRYFFLFCIQVEILA). The Extracellular segment spans residues 20–141 (GEFNDSAASE…YESELCCQLK (122 aa)). N-linked (GlcNAc...) asparagine glycosylation is present at Asn-23. The Ig-like V-type domain maps to 30 to 133 (MFIFHNGGVQ…LSREYLNIYE (104 aa)). 2 cysteine pairs are disulfide-bonded: Cys-42-Cys-109 and Cys-63-Cys-83. A glycan (N-linked (GlcNAc...) asparagine) is linked at Asn-89. Residues 142-162 (FWLPIGCAAFVTVCVFGCVLM) form a helical membrane-spanning segment.

In terms of assembly, homodimer; disulfide-linked. Interacts with ICOSLG. Interacts with PIK3R1. Interacts with TBK1; this interaction is critical for the maturation of T follicular regulatory cells. In terms of processing, N-glycosylated.

Its subcellular location is the cell membrane. Functionally, stimulatory receptor expressed in activated or antigen-experienced T-cells that plays an important role in the immune response. Upon binding to its ligand ICOSL expressed on antigen presenting cells (APCs), delivers costimulatory signals that enhances all basic T-cell responses to a foreign antigen, namely proliferation, secretion of lymphokines including IL10, up-regulation of molecules that mediate cell-cell interaction, and effective help for antibody secretion by B-cells. Also acts as a costimulatory receptor critical for the differentiation of T follicular regulatory cells upon immune challenges such as viral infection. Mechanistically, potentiates TCR-induced calcium flux by augmenting PLCG1 activation and actin remodeling. In addition, activates PI3K signaling pathways independently of calcium flux. Essential both for efficient interaction between T and B-cells and for normal antibody responses to T-cell dependent antigens. Prevents the apoptosis of pre-activated T-cells. Plays a critical role in CD40-mediated class switching of immunoglobin isotypes. The sequence is that of Inducible T-cell costimulator (ICOS) from Bos taurus (Bovine).